An 888-amino-acid chain; its full sequence is Patched domain-containing protein 1 (888 aa).

A helical membrane pass occupies residues 20 to 40 (FIASHPVFFASAPVLISILLG). N-linked (GlcNAc...) asparagine glycans are attached at residues asparagine 77, asparagine 133, and asparagine 167. Residues 268 to 427 (SERYLVTSLI…LSFYGSSLVF (160 aa)) form the SSD domain. The next 2 helical transmembrane spans lie at 273–293 (VTSLILVVTMAILCCSMQDCV) and 298–318 (WLGLLGLVTISLATLTAAGII). Asparagine 319 and asparagine 326 each carry an N-linked (GlcNAc...) asparagine glycan. Transmembrane regions (helical) follow at residues 328-348 (TFLGVPFVMLGHGLYGTFEML), 373-393 (LSFSLTTAMYLVTFGIGASPF), 407-427 (CIAILFNYLYVLSFYGSSLVF), and 502-522 (PFVVLFYLIYISFALMGYLQV). Residues asparagine 568, asparagine 599, and asparagine 608 are each glycosylated (N-linked (GlcNAc...) asparagine). The next 2 membrane-spanning stretches (helical) occupy residues 707–727 (ALFLLFFSAFLVADSLINVWI) and 738–758 (VIGFMTLWKVELDCISVLCLI). Asparagine 762 carries an N-linked (GlcNAc...) asparagine glycan. Residues 795–815 (GVAILQSYLCYIVGLFPLAAV) form a helical membrane-spanning segment. An N-linked (GlcNAc...) asparagine glycan is attached at asparagine 818. Residues 826 to 846 (CLFLIAFVTFFHCFAILPVIL) form a helical membrane-spanning segment.

This sequence belongs to the patched family. In terms of tissue distribution, broadly expressed in the brain. Selectively expressed in the thalamic reticular nucleus (TRN) in early development and continues to be enriched in this structure throughout adult life.

The protein resides in the cell membrane. The protein localises to the cell projection. It is found in the dendritic spine. Required for the development and function of the thalamic reticular nucleus (TRN), a part of the thalamus that is critical for thalamocortical transmission, generation of sleep rhythms, sensorimotor processing and attention. Can bind cholesterol in vitro. The sequence is that of Patched domain-containing protein 1 from Mus musculus (Mouse).